The chain runs to 301 residues: Probable porphobilinogen deaminase (301 aa).

Cysteine 241 is modified (S-(dipyrrolylmethanemethyl)cysteine).

This sequence belongs to the HMBS family. Dipyrromethane is required as a cofactor.

It catalyses the reaction 4 porphobilinogen + H2O = hydroxymethylbilane + 4 NH4(+). Its pathway is porphyrin-containing compound metabolism; protoporphyrin-IX biosynthesis; coproporphyrinogen-III from 5-aminolevulinate: step 2/4. In terms of biological role, tetrapolymerization of the monopyrrole PBG into the hydroxymethylbilane pre-uroporphyrinogen in several discrete steps. In Pyrobaculum islandicum (strain DSM 4184 / JCM 9189 / GEO3), this protein is Probable porphobilinogen deaminase.